We begin with the raw amino-acid sequence, 426 residues long: Serine/threonine-protein kinase ssn3 (426 aa).

The Protein kinase domain occupies 41–368 (YHIVGFISSG…AQEALEHPYF (328 aa)). ATP-binding positions include 47 to 55 (ISSGTYGRV) and Lys71. Asp173 serves as the catalytic Proton acceptor. Positions 390 to 426 (RVTQDDNDIRSGSLPGTKRSGLPDDSLMGRAAKRLKE) are disordered.

This sequence belongs to the protein kinase superfamily. CMGC Ser/Thr protein kinase family. CDC2/CDKX subfamily. As to quaternary structure, component of the srb8-11 complex, a regulatory module of the Mediator complex. It depends on Mg(2+) as a cofactor.

The protein resides in the nucleus. The catalysed reaction is L-seryl-[protein] + ATP = O-phospho-L-seryl-[protein] + ADP + H(+). It catalyses the reaction L-threonyl-[protein] + ATP = O-phospho-L-threonyl-[protein] + ADP + H(+). The enzyme catalyses [DNA-directed RNA polymerase] + ATP = phospho-[DNA-directed RNA polymerase] + ADP + H(+). In terms of biological role, component of the srb8-11 complex. The srb8-11 complex is a regulatory module of the Mediator complex which is itself involved in regulation of basal and activated RNA polymerase II-dependent transcription. The srb8-11 complex may be involved in the transcriptional repression of a subset of genes regulated by Mediator. It may inhibit the association of the Mediator complex with RNA polymerase II to form the holoenzyme complex. The srb8-11 complex phosphorylates the C-terminal domain (CTD) of the largest subunit of RNA polymerase II. This is Serine/threonine-protein kinase ssn3 (ssn3) from Aspergillus clavatus (strain ATCC 1007 / CBS 513.65 / DSM 816 / NCTC 3887 / NRRL 1 / QM 1276 / 107).